The following is a 211-amino-acid chain: Flagellar calcium-binding protein (211 aa).

The disordered stretch occupies residues 1-29 (MGACGSKGSTSDKGLASDKDGKKAKDRKE). Basic and acidic residues predominate over residues 15–29 (LASDKDGKKAKDRKE). EF-hand domains lie at 45-80 (EAKQ…VLKL), 81-116 (DEFT…FVEF), 127-162 (YDFF…LEAW), and 164-199 (AKVE…VKLD). The Ca(2+) site is built by Asp58, Asn60, Thr62, Lys64, and Glu69. The Ca(2+) site is built by Asp140, Ser142, Asn144, Glu151, Asp177, Asn179, Thr181, Ser183, and Glu188.

Belongs to the calflagin family.

It is found in the cell projection. The protein resides in the cilium. The protein localises to the flagellum. In terms of biological role, may contribute to the rapid motility of the trypanosomes, playing a role either in flagellar structure or in calcium metabolism. Could alternate between a GDP-bound inactive form to a calcium/GTP-bound active form. This is Flagellar calcium-binding protein (FCABP) from Trypanosoma cruzi.